Consider the following 62-residue polypeptide: Large ribosomal subunit protein eL19 (62 aa).

It belongs to the eukaryotic ribosomal protein eL19 family.

This Zea mays (Maize) protein is Large ribosomal subunit protein eL19 (RPL19).